Reading from the N-terminus, the 712-residue chain is Polyribonucleotide nucleotidyltransferase (712 aa).

Mg(2+)-binding residues include Asp493 and Asp499. The KH domain maps to 560 to 622 (PRLTKLTIDP…RDAEAAIERI (63 aa)). One can recognise an S1 motif domain in the interval 632-700 (GEDYVGTVKG…DDGKMRLTRK (69 aa)).

It belongs to the polyribonucleotide nucleotidyltransferase family. It depends on Mg(2+) as a cofactor.

It is found in the cytoplasm. The enzyme catalyses RNA(n+1) + phosphate = RNA(n) + a ribonucleoside 5'-diphosphate. Functionally, involved in mRNA degradation. Catalyzes the phosphorolysis of single-stranded polyribonucleotides processively in the 3'- to 5'-direction. The sequence is that of Polyribonucleotide nucleotidyltransferase from Salinibacter ruber (strain DSM 13855 / M31).